A 363-amino-acid polypeptide reads, in one-letter code: 5-formaminoimidazole-4-carboxamide-1-(beta)-D-ribofuranosyl 5'-monophosphate synthetase (363 aa).

Residues His29 and Ser96 each coordinate 5-amino-1-(5-phospho-beta-D-ribosyl)imidazole-4-carboxamide. The region spanning 118 to 354 (RDILRWEAER…ISREIKNAIE (237 aa)) is the ATP-grasp domain. ATP contacts are provided by residues 148-210 (PEDI…TNFC) and Glu232. Asn260 is a 5-amino-1-(5-phospho-beta-D-ribosyl)imidazole-4-carboxamide binding site. Residues Gln299 and Glu312 each coordinate Mg(2+).

The protein belongs to the phosphohexose mutase family. Mg(2+) serves as cofactor. Mn(2+) is required as a cofactor.

The enzyme catalyses 5-amino-1-(5-phospho-beta-D-ribosyl)imidazole-4-carboxamide + formate + ATP = 5-formamido-1-(5-phospho-D-ribosyl)imidazole-4-carboxamide + ADP + phosphate. The protein operates within purine metabolism; IMP biosynthesis via de novo pathway; 5-formamido-1-(5-phospho-D-ribosyl)imidazole-4-carboxamide from 5-amino-1-(5-phospho-D-ribosyl)imidazole-4-carboxamide (formate route): step 1/1. Its function is as follows. Catalyzes the ATP- and formate-dependent formylation of 5-aminoimidazole-4-carboxamide-1-beta-d-ribofuranosyl 5'-monophosphate (AICAR) to 5-formaminoimidazole-4-carboxamide-1-beta-d-ribofuranosyl 5'-monophosphate (FAICAR) in the absence of folates. The protein is 5-formaminoimidazole-4-carboxamide-1-(beta)-D-ribofuranosyl 5'-monophosphate synthetase of Methanosphaera stadtmanae (strain ATCC 43021 / DSM 3091 / JCM 11832 / MCB-3).